A 387-amino-acid polypeptide reads, in one-letter code: Protochlorophyllide reductase A, chloroplastic (387 aa).

The N-terminal 35 residues, 1 to 35 (MALQVQAALLPSALSVPKKGNLSAVVKEPGFLSVS), are a transit peptide targeting the chloroplast.

The protein belongs to the short-chain dehydrogenases/reductases (SDR) family. POR subfamily.

It is found in the plastid. Its subcellular location is the chloroplast. It carries out the reaction chlorophyllide a + NADP(+) = protochlorophyllide a + NADPH + H(+). The protein operates within porphyrin-containing compound metabolism; chlorophyll biosynthesis. Phototransformation of protochlorophyllide (Pchlide) to chlorophyllide (Chlide). The protein is Protochlorophyllide reductase A, chloroplastic (PORA) of Oryza sativa subsp. japonica (Rice).